A 279-amino-acid chain; its full sequence is HTH-type transcriptional activator RhaS (279 aa).

Residues 175 to 273 (QALLGWLQNN…SQAPKSLRHQ (99 aa)) enclose the HTH araC/xylS-type domain. 2 DNA-binding regions (H-T-H motif) span residues 192-213 (GSLA…KQHT) and 240-263 (ITTI…RKAF).

As to quaternary structure, binds DNA as a dimer.

It localises to the cytoplasm. Its function is as follows. Activates expression of the rhaBAD and rhaT operons. The protein is HTH-type transcriptional activator RhaS of Pectobacterium carotovorum subsp. carotovorum (strain PC1).